We begin with the raw amino-acid sequence, 369 residues long: tRNA/tmRNA (uracil-C(5))-methyltransferase (369 aa).

S-adenosyl-L-methionine contacts are provided by glutamine 192, tyrosine 221, asparagine 226, glutamate 242, and aspartate 302. Cysteine 327 serves as the catalytic Nucleophile. Glutamate 361 functions as the Proton acceptor in the catalytic mechanism.

The protein belongs to the class I-like SAM-binding methyltransferase superfamily. RNA M5U methyltransferase family. TrmA subfamily.

The catalysed reaction is uridine(54) in tRNA + S-adenosyl-L-methionine = 5-methyluridine(54) in tRNA + S-adenosyl-L-homocysteine + H(+). The enzyme catalyses uridine(341) in tmRNA + S-adenosyl-L-methionine = 5-methyluridine(341) in tmRNA + S-adenosyl-L-homocysteine + H(+). Functionally, dual-specificity methyltransferase that catalyzes the formation of 5-methyluridine at position 54 (m5U54) in all tRNAs, and that of position 341 (m5U341) in tmRNA (transfer-mRNA). This is tRNA/tmRNA (uracil-C(5))-methyltransferase from Haemophilus ducreyi (strain 35000HP / ATCC 700724).